A 428-amino-acid chain; its full sequence is MSSSRSVYSSSSVVGGSPYRSLSSAPRFTPGSSAASVHAGAGGSGARISVSRVSTVGSGFGGGFSGASNVNLFGGVQNEKETMQDLNDRLASYLERVRSLESANKKLEVQIRQHTEKKGPAKDWSPYYMTIEDLKKQVFNSIVENSQLVLQIDNARLAADDFRVKYESEVAIRMSVETDIGGLRKLIDDTNISRLNLENEFESLKEELIFLKKNHQDDVNELQAQIASSAVTVEVDAPKSQDLGKIMADLRAQYDEMAQKNREDVEKLYQSKVEEHTVQVNLDAEALHTAKSSVTELRRTMQSLEIELESLRNQKASLEGTLHDTEARYAMELEMLGGTAMALETELVQVRNDCQRQQQEYQALLNTKMKLEAEIQTYRRLLEGDSFDLQDAVPVVTTQTVKKVITTTQRLVDGKVVAESNNTEVIKS.

The head stretch occupies residues 2 to 78 (SSSRSVYSSS…NVNLFGGVQN (77 aa)). The interval 24–45 (SAPRFTPGSSAASVHAGAGGSG) is disordered. Residues 79-114 (EKETMQDLNDRLASYLERVRSLESANKKLEVQIRQH) are coil 1A. Residues 79–389 (EKETMQDLND…RLLEGDSFDL (311 aa)) form the IF rod domain. Positions 115 to 130 (TEKKGPAKDWSPYYMT) are linker 1. Residues 131–222 (IEDLKKQVFN…KNHQDDVNEL (92 aa)) are coil 1B. The segment at 223 to 246 (QAQIASSAVTVEVDAPKSQDLGKI) is linker 12. Residues 247-384 (MADLRAQYDE…IQTYRRLLEG (138 aa)) are coil 2. The tract at residues 385 to 428 (DSFDLQDAVPVVTTQTVKKVITTTQRLVDGKVVAESNNTEVIKS) is tail.

The protein belongs to the intermediate filament family. In terms of assembly, heterotetramer of two type I and two type II keratins. Keratin-18 associates with keratin-8. In terms of processing, proteolytically cleaved by caspases during epithelial cell apoptosis. In terms of tissue distribution, expressed at high levels in notochord and low levels in adult liver.

Its function is as follows. When phosphorylated, plays a role in filament reorganization. The sequence is that of Keratin, type I cytoskeletal 18-A (krt18-a) from Xenopus laevis (African clawed frog).